We begin with the raw amino-acid sequence, 290 residues long: GTPase Era (290 aa).

Residues 2 to 169 (KSGFAAILGR…KNKIYENFSE (168 aa)) enclose the Era-type G domain. The interval 10–17 (GRPSTGKS) is G1. 10–17 (GRPSTGKS) provides a ligand contact to GTP. The G2 stretch occupies residues 36–40 (QTTRN). Residues 57 to 60 (DTPG) form a G3 region. Residues 57 to 61 (DTPGF) and 119 to 122 (NKVD) each bind GTP. The G4 stretch occupies residues 119–122 (NKVD). A G5 region spans residues 148 to 150 (ISA). The 77-residue stretch at 200–276 (LKEELPYSLY…NLFLQVKLKK (77 aa)) folds into the KH type-2 domain.

The protein belongs to the TRAFAC class TrmE-Era-EngA-EngB-Septin-like GTPase superfamily. Era GTPase family. In terms of assembly, monomer.

It is found in the cytoplasm. The protein resides in the cell inner membrane. Its function is as follows. An essential GTPase that binds both GDP and GTP, with rapid nucleotide exchange. Plays a role in 16S rRNA processing and 30S ribosomal subunit biogenesis and possibly also in cell cycle regulation and energy metabolism. The polypeptide is GTPase Era (Borreliella afzelii (strain PKo) (Borrelia afzelii)).